The sequence spans 590 residues: Protein NRT1/ PTR FAMILY 6.3 (590 aa).

Helical transmembrane passes span 46–66 and 77–97; these read LTTL…MHLG and FLGT…TFLG. Residue T101 is modified to Phosphothreonine; by CIPK23. A run of 10 helical transmembrane segments spans residues 102–122, 143–163, 193–213, 219–239, 342–362, 374–394, 423–443, 460–480, 501–521, and 542–562; these read IAIF…STII, GIQL…TGGV, FFFC…YVQD, WGYG…LAGT, MLPI…LTTL, IGSF…GLLL, IGLG…VELK, LGFY…ALIY, GLLL…VTIV, and YNFY…FLVF. H356 and T360 together coordinate substrate.

It belongs to the major facilitator superfamily. Proton-dependent oligopeptide transporter (POT/PTR) (TC 2.A.17) family. As to quaternary structure, monomer and homodimer. The dimer has the 2 monomers in the same orientation. Interacts with CIPK23. In terms of processing, acts as a high-affinity nitrate transporter when phosphorylated and as a low-affinity transporter when dephosphorylated. Forms homodimer when unphosphorylated and monomer when phosphorylated. Low nitrogen concentration in the medium stimulates phosphorylation. Phosphorylation also regulates the nitrate signaling. Expressed in the stele in lateral root primordia before emergence and in the tip of primary and emerged lateral roots. Detected in emerging and immature leaves, guard cells, flower buds, style, stigma, anthers and pollen grains. Not detected in the shoot apical meristem.

It localises to the membrane. In terms of biological role, dual affinity nitrate transporter. Involved in proton-dependent nitrate uptake and in the regulation of the nitrate transporter NRT2.1. Also acts as a nitrate sensor that trigger a specific signaling pathway stimulating lateral root growth and seed germination. The uptake activity is not required for sensor function. Displays an auxin transport facilitation inhibited by high nitrate concentration. Required to prevent auxin accumulation in preemerged lateral root primordia and young lateral roots when external nitrate concentration is low or null. May be involved in the basipetal transport of auxin out of the lateral root tips. Acts as a bidirectional transporter involved in root-to-shoot nitrate translocation. Recognizes specifically nitrate and chlorate, but not nitrite, alanine, sulfate, phosphate or the di-peptide Ala-Ala. The sequence is that of Protein NRT1/ PTR FAMILY 6.3 (NPF6.3) from Arabidopsis thaliana (Mouse-ear cress).